A 264-amino-acid polypeptide reads, in one-letter code: MAVGKNKRLTKGGKKGAKKKVVDPFSKKDWYDVKAPAMFNIRNIGKTLVTRTQGTKIASDGLKGHVFEVSLADLQNDEVAFRKFKLITEDVQGKNCLTNFHGMDLTRDKMCSMVKKWQTMIEAHVDVKTTDGYLLRLFCVGFTKKRNNQIRKTSYAQHQQVRQIRKKMMEIMTREVQTNDLKEVVNKLIPDSIGKDIEKACQSIYPLHDVFVRKVKMLKKPKFELGKLMELHGEGSSSGKATGDETGAKVERADGYEPPVQESV.

The residue at position 34 (lysine 34) is an N6-acetyllysine; alternate. Lysine 34 participates in a covalent cross-link: Glycyl lysine isopeptide (Lys-Gly) (interchain with G-Cter in SUMO2); alternate. Lysine 56 bears the N6-acetyllysine mark. Tyrosine 155 bears the ADP-ribosyltyrosine mark. Positions 232–264 are disordered; it reads HGEGSSSGKATGDETGAKVERADGYEPPVQESV. 2 positions are modified to phosphoserine: serine 236 and serine 237. Positions 242–255 are enriched in basic and acidic residues; that stretch reads TGDETGAKVERADG. Lysine 249 carries the N6-acetyllysine; alternate modification. Residue lysine 249 forms a Glycyl lysine isopeptide (Lys-Gly) (interchain with G-Cter in SUMO2); alternate linkage. Tyrosine 256 bears the Phosphotyrosine mark. Position 263 is a phosphoserine (serine 263).

This sequence belongs to the eukaryotic ribosomal protein eS1 family. In terms of assembly, component of the small ribosomal subunit. Mature ribosomes consist of a small (40S) and a large (60S) subunit. The 40S subunit contains about 33 different proteins and 1 molecule of RNA (18S). The 60S subunit contains about 49 different proteins and 3 molecules of RNA (28S, 5.8S and 5S). Identified in a IGF2BP1-dependent mRNP granule complex containing untranslated mRNAs. Binds with high affinity to IPO4. Interacts with DDIT3. Part of the small subunit (SSU) processome, composed of more than 70 proteins and the RNA chaperone small nucleolar RNA (snoRNA) U3. ADP-ribosylated at Tyr-155 by PARP1 in presence of HPF1.

Its subcellular location is the cytoplasm. The protein resides in the nucleus. It is found in the nucleolus. In terms of biological role, component of the small ribosomal subunit. The ribosome is a large ribonucleoprotein complex responsible for the synthesis of proteins in the cell. Part of the small subunit (SSU) processome, first precursor of the small eukaryotic ribosomal subunit. During the assembly of the SSU processome in the nucleolus, many ribosome biogenesis factors, an RNA chaperone and ribosomal proteins associate with the nascent pre-rRNA and work in concert to generate RNA folding, modifications, rearrangements and cleavage as well as targeted degradation of pre-ribosomal RNA by the RNA exosome. May play a role during erythropoiesis through regulation of transcription factor DDIT3. The polypeptide is Small ribosomal subunit protein eS1 (Macaca fascicularis (Crab-eating macaque)).